A 321-amino-acid chain; its full sequence is Cytochrome c biogenesis protein CcsA (321 aa).

The next 8 membrane-spanning stretches (helical) occupy residues 12 to 32 (HISF…LLVY), 45 to 62 (MIAT…RWIS), 71 to 91 (LYES…ILYI), 98 to 117 (LNAI…TSGL), 143 to 163 (MLLS…LIVI), 227 to 247 (VISL…VWAN), 260 to 277 (ETWA…LHTR), and 292 to 312 (VASI…LLGI).

Belongs to the CcmF/CycK/Ccl1/NrfE/CcsA family. As to quaternary structure, may interact with Ccs1.

It is found in the plastid. The protein localises to the chloroplast thylakoid membrane. Required during biogenesis of c-type cytochromes (cytochrome c6 and cytochrome f) at the step of heme attachment. The sequence is that of Cytochrome c biogenesis protein CcsA from Phalaenopsis aphrodite subsp. formosana (Moth orchid).